Consider the following 425-residue polypeptide: Homogentisate 1,2-dioxygenase (425 aa).

Histidine 283 functions as the Proton acceptor in the catalytic mechanism. Fe cation-binding residues include histidine 326 and glutamate 332. 2 residues coordinate homogentisate: tyrosine 341 and histidine 362. A Fe cation-binding site is contributed by histidine 362.

Belongs to the homogentisate dioxygenase family. In terms of assembly, hexamer; dimer of trimers. Fe cation serves as cofactor.

The catalysed reaction is homogentisate + O2 = 4-maleylacetoacetate + H(+). It participates in amino-acid degradation; L-phenylalanine degradation; acetoacetate and fumarate from L-phenylalanine: step 4/6. Functionally, involved in the catabolism of homogentisate (2,5-dihydroxyphenylacetate or 2,5-OH-PhAc), a central intermediate in the degradation of phenylalanine and tyrosine. Catalyzes the oxidative ring cleavage of the aromatic ring of homogentisate to yield maleylacetoacetate. This Caulobacter vibrioides (strain ATCC 19089 / CIP 103742 / CB 15) (Caulobacter crescentus) protein is Homogentisate 1,2-dioxygenase.